Reading from the N-terminus, the 917-residue chain is Protein translocase subunit SecA 1 (917 aa).

Residues Gln87, 105 to 109 (GEGKT), and Asp507 contribute to the ATP site. Residues 866–917 (EKSPESIGEDIEGREHPQKHQPFVRQGEKIGRNDPCPCGSGKKYKQCHGKLN) form a disordered region. Residues Cys901, Cys903, Cys912, and His913 each coordinate Zn(2+). Positions 907 to 917 (KKYKQCHGKLN) are enriched in basic residues.

Belongs to the SecA family. In terms of assembly, monomer and homodimer. Part of the essential Sec protein translocation apparatus which comprises SecA, SecYEG and auxiliary proteins SecDF-YajC and YidC. Zn(2+) is required as a cofactor.

The protein localises to the cell inner membrane. It localises to the cytoplasm. It carries out the reaction ATP + H2O + cellular proteinSide 1 = ADP + phosphate + cellular proteinSide 2.. Part of the Sec protein translocase complex. Interacts with the SecYEG preprotein conducting channel. Has a central role in coupling the hydrolysis of ATP to the transfer of proteins into and across the cell membrane, serving both as a receptor for the preprotein-SecB complex and as an ATP-driven molecular motor driving the stepwise translocation of polypeptide chains across the membrane. The chain is Protein translocase subunit SecA 1 from Nitrosospira multiformis (strain ATCC 25196 / NCIMB 11849 / C 71).